The primary structure comprises 378 residues: 8-demethyl-8-alpha-L-rhamnosyl tetracenomycin-C 2'-O-methyltransferase (378 aa).

S-adenosyl-L-methionine contacts are provided by residues Glu195–Tyr201, Ser210, Asp227, Asp245–Gln246, and Asp268. Residue Asp268 participates in Mg(2+) binding. Catalysis depends on His271, which acts as the Proton acceptor. 2 residues coordinate Mg(2+): Glu296 and Asp297.

This sequence belongs to the methyltransferase OleY/MycE family. Mg(2+) serves as cofactor.

The enzyme catalyses 8-demethyl-8-alpha-L-rhamnosyl-tetracenomycin C + S-adenosyl-L-methionine = 8-demethyl-8-(2-O-methyl-alpha-L-rhamnosyl)-tetracenomycin C + S-adenosyl-L-homocysteine + H(+). It functions in the pathway antibiotic biosynthesis. Functionally, O-methyltransferase involved in the biosynthesis of the permethylated L-rhamnose moiety of elloramycin, an antitumor polyketide. Mediates the methylation of the hydroxy groups at the 2'-position after the sugar moiety has been attached to the aglycon. This chain is 8-demethyl-8-alpha-L-rhamnosyl tetracenomycin-C 2'-O-methyltransferase, found in Streptomyces olivaceus.